The sequence spans 436 residues: Gamma-glutamyl phosphate reductase (436 aa).

This sequence belongs to the gamma-glutamyl phosphate reductase family.

The protein resides in the cytoplasm. The enzyme catalyses L-glutamate 5-semialdehyde + phosphate + NADP(+) = L-glutamyl 5-phosphate + NADPH + H(+). The protein operates within amino-acid biosynthesis; L-proline biosynthesis; L-glutamate 5-semialdehyde from L-glutamate: step 2/2. Its function is as follows. Catalyzes the NADPH-dependent reduction of L-glutamate 5-phosphate into L-glutamate 5-semialdehyde and phosphate. The product spontaneously undergoes cyclization to form 1-pyrroline-5-carboxylate. The sequence is that of Gamma-glutamyl phosphate reductase from Prochlorococcus marinus (strain MIT 9301).